The chain runs to 106 residues: Large ribosomal subunit protein uL24 (106 aa).

Belongs to the universal ribosomal protein uL24 family. Part of the 50S ribosomal subunit.

Its function is as follows. One of two assembly initiator proteins, it binds directly to the 5'-end of the 23S rRNA, where it nucleates assembly of the 50S subunit. Functionally, one of the proteins that surrounds the polypeptide exit tunnel on the outside of the subunit. This Gluconobacter oxydans (strain 621H) (Gluconobacter suboxydans) protein is Large ribosomal subunit protein uL24.